We begin with the raw amino-acid sequence, 131 residues long: ER membrane protein complex subunit 5 (131 aa).

The Cytoplasmic portion of the chain corresponds to 1–3 (MAP). The helical transmembrane segment at 4 to 22 (SLWKGLVGIGLFALAHAAL) threads the bilayer. The Lumenal segment spans residues 23–43 (SAAQHRSYMRLTEKEDESLPI). Residues 44-63 (DIVLQTLLAFAVTCYGIVHI) form a helical membrane-spanning segment. The Cytoplasmic segment spans residues 64–131 (AGEFKDMDAT…KLRKLESLRR (68 aa)). Ser120 is subject to Phosphoserine.

The protein belongs to the membrane magnesium transporter (TC 1.A.67) family. As to quaternary structure, component of the ER membrane protein complex (EMC).

The protein localises to the endoplasmic reticulum membrane. It localises to the golgi apparatus membrane. The protein resides in the early endosome membrane. Functionally, part of the endoplasmic reticulum membrane protein complex (EMC) that enables the energy-independent insertion into endoplasmic reticulum membranes of newly synthesized membrane proteins. Preferentially accommodates proteins with transmembrane domains that are weakly hydrophobic or contain destabilizing features such as charged and aromatic residues. Involved in the cotranslational insertion of multi-pass membrane proteins in which stop-transfer membrane-anchor sequences become ER membrane spanning helices. It is also required for the post-translational insertion of tail-anchored/TA proteins in endoplasmic reticulum membranes. By mediating the proper cotranslational insertion of N-terminal transmembrane domains in an N-exo topology, with translocated N-terminus in the lumen of the ER, controls the topology of multi-pass membrane proteins like the G protein-coupled receptors. By regulating the insertion of various proteins in membranes, it is indirectly involved in many cellular processes. May be involved in Mg(2+) transport. This is ER membrane protein complex subunit 5 from Pongo abelii (Sumatran orangutan).